The chain runs to 154 residues: Large ribosomal subunit protein uL16 (154 aa).

The protein belongs to the universal ribosomal protein uL16 family. As to quaternary structure, part of the 50S ribosomal subunit.

Its function is as follows. Binds 23S rRNA and is also seen to make contacts with the A and possibly P site tRNAs. The protein is Large ribosomal subunit protein uL16 of Synechococcus sp. (strain RCC307).